The primary structure comprises 231 residues: Putative S-adenosylmethionine-dependent methyltransferase RcsF (231 aa).

A TsaA-like domain is found at 5-142; that stretch reads VSPIGYIRSC…YVPYADAVAD (138 aa). Residues 22 to 24, 63 to 64, arginine 91, and 122 to 125 contribute to the S-adenosyl-L-methionine site; these read PRQ, HQ, and LDGT.

Belongs to the tRNA methyltransferase O family.

This chain is Putative S-adenosylmethionine-dependent methyltransferase RcsF (rcsF), found in Pseudomonas aeruginosa (strain ATCC 15692 / DSM 22644 / CIP 104116 / JCM 14847 / LMG 12228 / 1C / PRS 101 / PAO1).